The following is a 285-amino-acid chain: Type II secretion system protein C (285 aa).

Over 1–27 (MSKGIKMHNSVMRLTIPNKKIINYAPH) the chain is Cytoplasmic. A helical membrane pass occupies residues 28-46 (IVTSIILFFICQQLAQLTW). The Periplasmic segment spans residues 47-285 (KIILPVNFTD…NDIYLALRDE (239 aa)).

Belongs to the GSP C family.

The protein resides in the cell inner membrane. Involved in a type II secretion system (T2SS, formerly general secretion pathway, GSP) for the export of proteins. Required for the translocation of pullulanase. This is Type II secretion system protein C (pulC) from Klebsiella pneumoniae.